Consider the following 596-residue polypeptide: Inactive metallocarboxypeptidase ecm14 (596 aa).

Positions 1-26 (MSQSHSILSSLILLVAIIFCVPHVIA) are cleaved as a signal peptide. Positions 27-190 (VPWTTDGHAQ…SYPSMAYADA (164 aa)) are excised as a propeptide. A glycan (N-linked (GlcNAc...) asparagine) is linked at Asn-114. Residues 220–540 (NYQPLSVIIP…NVIKYFGDFL (321 aa)) enclose the Peptidase M14 domain. Zn(2+) contacts are provided by His-285 and Glu-288. Residues 285–288 (HARE), Arg-343, and 360–361 (DR) each bind substrate. A disulfide bridge links Cys-354 with Cys-376. N-linked (GlcNAc...) asparagine glycosylation is present at Asn-400. Residue His-416 coordinates Zn(2+). Residue 417–418 (SY) participates in substrate binding.

This sequence belongs to the peptidase M14 family. Requires Zn(2+) as cofactor.

The protein resides in the vacuole. It localises to the secreted. Its function is as follows. Inactive carboxypeptidase that may play a role in cell wall organization and biogenesis. The sequence is that of Inactive metallocarboxypeptidase ecm14 (ecm14) from Sclerotinia sclerotiorum (strain ATCC 18683 / 1980 / Ss-1) (White mold).